The sequence spans 144 residues: Urease subunit beta (144 aa).

This sequence belongs to the urease beta subunit family. In terms of assembly, heterotrimer of UreA (gamma), UreB (beta) and UreC (alpha) subunits. Three heterotrimers associate to form the active enzyme.

The protein resides in the cytoplasm. It carries out the reaction urea + 2 H2O + H(+) = hydrogencarbonate + 2 NH4(+). It functions in the pathway nitrogen metabolism; urea degradation; CO(2) and NH(3) from urea (urease route): step 1/1. The sequence is that of Urease subunit beta from Yersinia pseudotuberculosis serotype O:1b (strain IP 31758).